The chain runs to 1167 residues: DNA-directed RNA polymerase subunit beta (1167 aa).

It belongs to the RNA polymerase beta chain family. In terms of assembly, the RNAP catalytic core consists of 2 alpha, 1 beta, 1 beta' and 1 omega subunit. When a sigma factor is associated with the core the holoenzyme is formed, which can initiate transcription.

The enzyme catalyses RNA(n) + a ribonucleoside 5'-triphosphate = RNA(n+1) + diphosphate. In terms of biological role, DNA-dependent RNA polymerase catalyzes the transcription of DNA into RNA using the four ribonucleoside triphosphates as substrates. The protein is DNA-directed RNA polymerase subunit beta of Treponema denticola (strain ATCC 35405 / DSM 14222 / CIP 103919 / JCM 8153 / KCTC 15104).